The sequence spans 127 residues: Translation initiation factor 5A (127 aa).

Residue Lys36 is modified to Hypusine.

Belongs to the eIF-5A family.

The protein localises to the cytoplasm. Functions by promoting the formation of the first peptide bond. The sequence is that of Translation initiation factor 5A (eif5a) from Halobacterium salinarum (strain ATCC 700922 / JCM 11081 / NRC-1) (Halobacterium halobium).